A 140-amino-acid chain; its full sequence is UPF0102 protein ACIAD1132 (140 aa).

Belongs to the UPF0102 family.

This chain is UPF0102 protein ACIAD1132, found in Acinetobacter baylyi (strain ATCC 33305 / BD413 / ADP1).